A 118-amino-acid chain; its full sequence is V-type proton ATPase subunit G 1 (118 aa).

Ala-2 carries the post-translational modification N-acetylalanine. Positions 19–42 (AEKVSEARKRKNRRLKQAKEEAQA) are disordered.

Belongs to the V-ATPase G subunit family. As to quaternary structure, V-ATPase is a heteromultimeric enzyme made up of two complexes: the ATP-hydrolytic V1 complex and the proton translocation V0 complex. The V1 complex consists of three catalytic AB heterodimers that form a heterohexamer, three peripheral stalks each consisting of EG heterodimers, one central rotor including subunits D and F, and the regulatory subunits C and H. The proton translocation complex V0 consists of the proton transport subunit a, a ring of proteolipid subunits c9c'', rotary subunit d, subunits e and f, and the accessory subunits ATP6AP1/Ac45 and ATP6AP2/PRR. In terms of tissue distribution, brain, heart, kidney and spleen.

The protein resides in the apical cell membrane. In terms of biological role, subunit of the V1 complex of vacuolar(H+)-ATPase (V-ATPase), a multisubunit enzyme composed of a peripheral complex (V1) that hydrolyzes ATP and a membrane integral complex (V0) that translocates protons. V-ATPase is responsible for acidifying and maintaining the pH of intracellular compartments and in some cell types, is targeted to the plasma membrane, where it is responsible for acidifying the extracellular environment. In aerobic conditions, involved in intracellular iron homeostasis, thus triggering the activity of Fe(2+) prolyl hydroxylase (PHD) enzymes, and leading to HIF1A hydroxylation and subsequent proteasomal degradation. This Bos taurus (Bovine) protein is V-type proton ATPase subunit G 1 (ATP6V1G1).